A 197-amino-acid polypeptide reads, in one-letter code: Thymidylate kinase (197 aa).

Residue Gly-7 to Ser-14 participates in ATP binding.

This sequence belongs to the thymidylate kinase family.

The enzyme catalyses dTMP + ATP = dTDP + ADP. In terms of biological role, phosphorylation of dTMP to form dTDP in both de novo and salvage pathways of dTTP synthesis. The protein is Thymidylate kinase of Fervidobacterium nodosum (strain ATCC 35602 / DSM 5306 / Rt17-B1).